We begin with the raw amino-acid sequence, 126 residues long: Large ribosomal subunit protein bL12 (126 aa).

This sequence belongs to the bacterial ribosomal protein bL12 family. As to quaternary structure, homodimer. Part of the ribosomal stalk of the 50S ribosomal subunit. Forms a multimeric L10(L12)X complex, where L10 forms an elongated spine to which 2 to 4 L12 dimers bind in a sequential fashion. Binds GTP-bound translation factors.

Its function is as follows. Forms part of the ribosomal stalk which helps the ribosome interact with GTP-bound translation factors. Is thus essential for accurate translation. In Solibacter usitatus (strain Ellin6076), this protein is Large ribosomal subunit protein bL12.